The chain runs to 431 residues: Adenylosuccinate synthetase (431 aa).

GTP contacts are provided by residues 12 to 18 (GDEGKGK) and 40 to 42 (GHT). Asp13 serves as the catalytic Proton acceptor. Mg(2+) is bound by residues Asp13 and Gly40. IMP contacts are provided by residues 13–16 (DEGK), 38–41 (NAGH), Thr131, Arg145, Gln225, Thr240, and Arg304. The active-site Proton donor is the His41. 300–306 (VNTGRPR) contributes to the substrate binding site. GTP is bound by residues Arg306, 332 to 334 (KLD), and 414 to 416 (STS).

The protein belongs to the adenylosuccinate synthetase family. As to quaternary structure, homodimer. It depends on Mg(2+) as a cofactor.

Its subcellular location is the cytoplasm. The enzyme catalyses IMP + L-aspartate + GTP = N(6)-(1,2-dicarboxyethyl)-AMP + GDP + phosphate + 2 H(+). It functions in the pathway purine metabolism; AMP biosynthesis via de novo pathway; AMP from IMP: step 1/2. Its function is as follows. Plays an important role in the de novo pathway of purine nucleotide biosynthesis. Catalyzes the first committed step in the biosynthesis of AMP from IMP. The polypeptide is Adenylosuccinate synthetase (Rhizobium rhizogenes (strain K84 / ATCC BAA-868) (Agrobacterium radiobacter)).